A 298-amino-acid polypeptide reads, in one-letter code: Heterogeneous nuclear ribonucleoprotein C (298 aa).

Ala-2 carries the post-translational modification N-acetylalanine. Glycyl lysine isopeptide (Lys-Gly) (interchain with G-Cter in SUMO2) cross-links involve residues Lys-8, Lys-50, Lys-89, and Lys-94. One can recognise an RRM domain in the interval 16–87 (SRVFIGNLNT…QVLDINLAAE (72 aa)). Ser-108 carries the phosphoserine modification. Disordered stretches follow at residues 131-177 (PPPP…VKGD) and 204-298 (EKEQ…EDDS). Positions 142-148 (PSKRQRV) match the Nuclear localization signal motif. 2 positions are modified to phosphoserine: Ser-149 and Ser-153. Over residues 162–173 (SKSGQRGSSSKS) the composition is skewed to low complexity. An N6-acetyllysine; alternate modification is found at Lys-163. Residue Lys-163 forms a Glycyl lysine isopeptide (Lys-Gly) (interchain with G-Cter in SUMO2); alternate linkage. A coiled-coil region spans residues 176–211 (GDDLQAIKKELTQIKQKVDSLLESLEKIEKEQSKQA). Lys-209 participates in a covalent cross-link: Glycyl lysine isopeptide (Lys-Gly) (interchain with G-Cter in SUMO2). A phosphoserine mark is found at Ser-214, Ser-216, and Ser-217. A Glycyl lysine isopeptide (Lys-Gly) (interchain with G-Cter in SUMO2) cross-link involves residue Lys-222. Lys-225 participates in a covalent cross-link: Glycyl lysine isopeptide (Lys-Gly) (interchain with G-Cter in SUMO2); alternate. Residue Lys-225 forms a Glycyl lysine isopeptide (Lys-Gly) (interchain with G-Cter in SUMO1); alternate linkage. Phosphoserine is present on residues Ser-226, Ser-231, Ser-232, and Ser-234. Positions 235-246 (VKKDETNVKMES) are enriched in basic and acidic residues. Glycyl lysine isopeptide (Lys-Gly) (interchain with G-Cter in SUMO2) cross-links involve residues Lys-236 and Lys-237. Lys-243 participates in a covalent cross-link: Glycyl lysine isopeptide (Lys-Gly) (interchain with G-Cter in SUMO2); alternate. Lys-243 participates in a covalent cross-link: Glycyl lysine isopeptide (Lys-Gly) (interchain with G-Cter in SUMO); alternate. Phosphoserine is present on residues Ser-246 and Ser-253. Residues 248 to 269 (AGADDSAEEGDLLDDDDNEDRG) show a composition bias toward acidic residues. The span at 270–279 (DDQLELKDDE) shows a compositional bias: basic and acidic residues. A compositionally biased stretch (acidic residues) spans 280-298 (KEPEEGEDDRDSANGEDDS). A phosphoserine mark is found at Ser-291 and Ser-298.

It belongs to the RRM HNRPC family. RALY subfamily. As to quaternary structure, tetramer composed of 3 copies of isoform C1 and 1 copy of isoform C2. Assembly of 3 tetramers with bound pre-mRNA gives rise to a 19S complex that interacts with HNRNPA2B1 tetramers. Component of the 40S hnRNP particle. Identified in the spliceosome C complex. Interacts with IGF2BP1. Interacts with PPIA/CYPA. In terms of processing, phosphorylated on Ser-253 and Ser-291 in resting cells. Sumoylated. Sumoylation reduces affinity for mRNA. Post-translationally, ubiquitinated and degraded after nucleo-cytoplasmic transport by YWHAE.

It is found in the nucleus. Functionally, binds pre-mRNA and nucleates the assembly of 40S hnRNP particles. Interacts with poly-U tracts in the 3'-UTR or 5'-UTR of mRNA and modulates the stability and the level of translation of bound mRNA molecules. Single HNRNPC tetramers bind 230-240 nucleotides. Trimers of HNRNPC tetramers bind 700 nucleotides. May play a role in the early steps of spliceosome assembly and pre-mRNA splicing. N6-methyladenosine (m6A) has been shown to alter the local structure in mRNAs and long non-coding RNAs (lncRNAs) via a mechanism named 'm(6)A-switch', facilitating binding of HNRNPC, leading to regulation of mRNA splicing. This chain is Heterogeneous nuclear ribonucleoprotein C, found in Rattus norvegicus (Rat).